A 152-amino-acid chain; its full sequence is Deoxyuridine 5'-triphosphate nucleotidohydrolase (152 aa).

Substrate is bound by residues 71–73 (RSG), Asn-84, 88–90 (LID), and Met-98.

The protein belongs to the dUTPase family. Mg(2+) serves as cofactor.

The catalysed reaction is dUTP + H2O = dUMP + diphosphate + H(+). The protein operates within pyrimidine metabolism; dUMP biosynthesis; dUMP from dCTP (dUTP route): step 2/2. This enzyme is involved in nucleotide metabolism: it produces dUMP, the immediate precursor of thymidine nucleotides and it decreases the intracellular concentration of dUTP so that uracil cannot be incorporated into DNA. This Enterobacter sp. (strain 638) protein is Deoxyuridine 5'-triphosphate nucleotidohydrolase.